Here is a 279-residue protein sequence, read N- to C-terminus: 3-methyl-2-oxobutanoate hydroxymethyltransferase (279 aa).

Residues aspartate 44 and aspartate 83 each coordinate Mg(2+). Residues 44-45 (DS), aspartate 83, and lysine 113 each bind 3-methyl-2-oxobutanoate. Glutamate 115 provides a ligand contact to Mg(2+). Residue glutamate 182 is the Proton acceptor of the active site.

This sequence belongs to the PanB family. As to quaternary structure, homodecamer; pentamer of dimers. Mg(2+) is required as a cofactor.

Its subcellular location is the cytoplasm. It carries out the reaction 3-methyl-2-oxobutanoate + (6R)-5,10-methylene-5,6,7,8-tetrahydrofolate + H2O = 2-dehydropantoate + (6S)-5,6,7,8-tetrahydrofolate. The protein operates within cofactor biosynthesis; (R)-pantothenate biosynthesis; (R)-pantoate from 3-methyl-2-oxobutanoate: step 1/2. Catalyzes the reversible reaction in which hydroxymethyl group from 5,10-methylenetetrahydrofolate is transferred onto alpha-ketoisovalerate to form ketopantoate. The protein is 3-methyl-2-oxobutanoate hydroxymethyltransferase of Dehalococcoides mccartyi (strain CBDB1).